The following is a 1002-amino-acid chain: ToxR-activated gene A lipoprotein (1002 aa).

A signal peptide spans Met-1–Gly-21. A lipid anchor (N-palmitoyl cysteine) is attached at Cys-22. Cys-22 carries the S-diacylglycerol cysteine lipid modification. The disordered stretch occupies residues Asp-31–Glu-53. The Fibronectin type-III domain occupies Lys-45–Ile-139. A Peptidase M66 domain is found at Glu-282–Val-536. His-432 is a binding site for Zn(2+). Glu-433 is an active-site residue. Residues His-436 and His-442 each contribute to the Zn(2+) site.

The cofactor is Zn(2+).

Its subcellular location is the cell membrane. In Vibrio cholerae serotype O1 (strain ATCC 39315 / El Tor Inaba N16961), this protein is ToxR-activated gene A lipoprotein (tagA).